A 586-amino-acid chain; its full sequence is Phosphomethylpyrimidine synthase (586 aa).

Positions 1-58 (MKQSVSAEQIELKSSLPGSKKVYVDGPREGMKVPMREIEQSDTNGVPNPPIRVYDTSG) are disordered. A compositionally biased stretch (basic and acidic residues) spans 22 to 39 (VYVDGPREGMKVPMREIE). Substrate-binding positions include Asn193, Met222, Tyr251, His287, 307 to 309 (SRG), 348 to 351 (DGLR), and Glu387. His391 serves as a coordination point for Zn(2+). Position 414 (Tyr414) interacts with substrate. His455 provides a ligand contact to Zn(2+). Cys535, Cys538, and Cys543 together coordinate [4Fe-4S] cluster.

The protein belongs to the ThiC family. [4Fe-4S] cluster is required as a cofactor.

The enzyme catalyses 5-amino-1-(5-phospho-beta-D-ribosyl)imidazole + S-adenosyl-L-methionine = 4-amino-2-methyl-5-(phosphooxymethyl)pyrimidine + CO + 5'-deoxyadenosine + formate + L-methionine + 3 H(+). It participates in cofactor biosynthesis; thiamine diphosphate biosynthesis. Catalyzes the synthesis of the hydroxymethylpyrimidine phosphate (HMP-P) moiety of thiamine from aminoimidazole ribotide (AIR) in a radical S-adenosyl-L-methionine (SAM)-dependent reaction. The sequence is that of Phosphomethylpyrimidine synthase from Bacillus thuringiensis (strain Al Hakam).